A 556-amino-acid chain; its full sequence is Formate--tetrahydrofolate ligase (556 aa).

Residue 65-72 (TAAGEGKS) coordinates ATP.

This sequence belongs to the formate--tetrahydrofolate ligase family.

It carries out the reaction (6S)-5,6,7,8-tetrahydrofolate + formate + ATP = (6R)-10-formyltetrahydrofolate + ADP + phosphate. It participates in one-carbon metabolism; tetrahydrofolate interconversion. This Elusimicrobium minutum (strain Pei191) protein is Formate--tetrahydrofolate ligase.